The chain runs to 473 residues: Photosystem II CP43 reaction center protein (473 aa).

A propeptide spanning residues M1–E14 is cleaved from the precursor. T15 carries the post-translational modification N-acetylthreonine. T15 bears the Phosphothreonine mark. A run of 5 helical transmembrane segments spans residues L69–A93, L134–N155, K178–T200, K255–S275, and W291–A312. E367 contributes to the [CaMn4O5] cluster binding site. A helical membrane pass occupies residues R447–P471.

It belongs to the PsbB/PsbC family. PsbC subfamily. In terms of assembly, PSII is composed of 1 copy each of membrane proteins PsbA, PsbB, PsbC, PsbD, PsbE, PsbF, PsbH, PsbI, PsbJ, PsbK, PsbL, PsbM, PsbT, PsbX, PsbY, PsbZ, Psb30/Ycf12, at least 3 peripheral proteins of the oxygen-evolving complex and a large number of cofactors. It forms dimeric complexes. It depends on Binds multiple chlorophylls and provides some of the ligands for the Ca-4Mn-5O cluster of the oxygen-evolving complex. It may also provide a ligand for a Cl- that is required for oxygen evolution. PSII binds additional chlorophylls, carotenoids and specific lipids. as a cofactor.

Its subcellular location is the plastid membrane. Its function is as follows. One of the components of the core complex of photosystem II (PSII). It binds chlorophyll and helps catalyze the primary light-induced photochemical processes of PSII. PSII is a light-driven water:plastoquinone oxidoreductase, using light energy to abstract electrons from H(2)O, generating O(2) and a proton gradient subsequently used for ATP formation. The protein is Photosystem II CP43 reaction center protein of Cuscuta obtusiflora (Peruvian dodder).